The primary structure comprises 396 residues: Flavohemoprotein (396 aa).

One can recognise a Globin domain in the interval 1-136 (MLDAQTIATV…LANVFINREA (136 aa)). Histidine 85 serves as a coordination point for heme b. Residues tyrosine 95 and glutamate 135 each act as charge relay system in the active site. The tract at residues 147–396 (GGWEGTRDFR…YECFGPHKVL (250 aa)) is reductase. The FAD-binding FR-type domain occupies 150-255 (EGTRDFRIVA…VAPAGDFFMA (106 aa)). FAD-binding positions include tyrosine 188 and 204-207 (RQYS). 268-273 (GVGQTP) contacts NADP(+). 389 to 392 (CFGP) contacts FAD.

This sequence belongs to the globin family. Two-domain flavohemoproteins subfamily. It in the C-terminal section; belongs to the flavoprotein pyridine nucleotide cytochrome reductase family. It depends on heme b as a cofactor. FAD serves as cofactor.

The catalysed reaction is 2 nitric oxide + NADPH + 2 O2 = 2 nitrate + NADP(+) + H(+). It catalyses the reaction 2 nitric oxide + NADH + 2 O2 = 2 nitrate + NAD(+) + H(+). Its function is as follows. Is involved in NO detoxification in an aerobic process, termed nitric oxide dioxygenase (NOD) reaction that utilizes O(2) and NAD(P)H to convert NO to nitrate, which protects the bacterium from various noxious nitrogen compounds. Therefore, plays a central role in the inducible response to nitrosative stress. The protein is Flavohemoprotein of Shigella flexneri.